The following is a 332-amino-acid chain: Cell division protein ZipA (332 aa).

Residues 1–6 (MMQDLR) are Periplasmic-facing. A helical membrane pass occupies residues 7 to 27 (LILIVVGAIAIIALLLHGLWT). The Cytoplasmic segment spans residues 28–332 (SRKERSSLFR…RLREVLENNA (305 aa)). Basic and acidic residues-rich tracts occupy residues 34-51 (SLFR…REQS) and 61-72 (GEVRVRSAHPED). Residues 34–184 (SLFRDRPAKR…PAVAHEPQPA (151 aa)) form a disordered region. A compositionally biased stretch (low complexity) spans 98–107 (PAPRAVQPAA). Residues 121–136 (DDILLDNYAQEEDDEP) show a composition bias toward acidic residues. The span at 155–171 (PAAEPAFHAEPAHQPQP) shows a compositional bias: low complexity.

This sequence belongs to the ZipA family. Interacts with FtsZ via their C-terminal domains.

Its subcellular location is the cell inner membrane. Its function is as follows. Essential cell division protein that stabilizes the FtsZ protofilaments by cross-linking them and that serves as a cytoplasmic membrane anchor for the Z ring. Also required for the recruitment to the septal ring of downstream cell division proteins. This Serratia proteamaculans (strain 568) protein is Cell division protein ZipA.